A 402-amino-acid polypeptide reads, in one-letter code: Sensor protein kinase FleS (402 aa).

One can recognise a Histidine kinase domain in the interval 188-393 (SLAHQIRTPL…CATLILPLIP (206 aa)). A Phosphohistidine; by autocatalysis modification is found at H191.

The catalysed reaction is ATP + protein L-histidine = ADP + protein N-phospho-L-histidine.. Member of the two-component regulatory system FleS/FleR that regulates the expression of multiple genes involved in flagellar synthesis, adhesion, swarming, motility and antibiotic resistance. May function as a membrane-associated protein kinase that phosphorylates FleR in response to environmental signals leading to activation of specific gene promoters. The sequence is that of Sensor protein kinase FleS (fleS) from Pseudomonas aeruginosa (strain ATCC 15692 / DSM 22644 / CIP 104116 / JCM 14847 / LMG 12228 / 1C / PRS 101 / PAO1).